Reading from the N-terminus, the 441-residue chain is Ribosomal protein uS12 methylthiotransferase RimO (441 aa).

Residues 7–117 (PKISFVSLGC…VLEAVHRARP (111 aa)) form the MTTase N-terminal domain. Residues C16, C52, C81, C148, C152, and C155 each contribute to the [4Fe-4S] cluster site. Residues 134-371 (LTPRHYAYLK…MARQQAISAR (238 aa)) form the Radical SAM core domain. A TRAM domain is found at 374–440 (KRKVGTRQQV…AYDLHGTVAG (67 aa)).

The protein belongs to the methylthiotransferase family. RimO subfamily. Requires [4Fe-4S] cluster as cofactor.

It localises to the cytoplasm. It carries out the reaction L-aspartate(89)-[ribosomal protein uS12]-hydrogen + (sulfur carrier)-SH + AH2 + 2 S-adenosyl-L-methionine = 3-methylsulfanyl-L-aspartate(89)-[ribosomal protein uS12]-hydrogen + (sulfur carrier)-H + 5'-deoxyadenosine + L-methionine + A + S-adenosyl-L-homocysteine + 2 H(+). Functionally, catalyzes the methylthiolation of an aspartic acid residue of ribosomal protein uS12. The polypeptide is Ribosomal protein uS12 methylthiotransferase RimO (Rhodopseudomonas palustris (strain ATCC BAA-98 / CGA009)).